The sequence spans 192 residues: Cobalt-precorrin-6B C(15)-methyltransferase (decarboxylating) (192 aa).

S-adenosyl-L-methionine is bound by residues Thr15, 39-43 (GAGTG), Glu62, and Ala90.

This sequence belongs to the methyltransferase superfamily. Bacterial-type CbiT family.

It carries out the reaction Co-precorrin-6B + S-adenosyl-L-methionine = Co-precorrin-7 + S-adenosyl-L-homocysteine + CO2. It participates in cofactor biosynthesis; adenosylcobalamin biosynthesis; cob(II)yrinate a,c-diamide from sirohydrochlorin (anaerobic route): step 8/10. Its function is as follows. Catalyzes the methylation of C-15 in cobalt-precorrin-6B followed by the decarboxylation of C-12 to form cobalt-precorrin-7. This Salmonella typhi protein is Cobalt-precorrin-6B C(15)-methyltransferase (decarboxylating) (cbiT).